Here is a 607-residue protein sequence, read N- to C-terminus: MPNETLQNQIASLPENPGVYLMKNAQGEIIYVGKAAVLKDRVKSYFVPPSRLTPKTCQLVSQINELEYLITGSEQEALILELNLIKRHRPYFNVRLKDDKGFPYLKITLNEKWPRIYITRSMADDGGRYFGPFANTRSVRHTLQVLKELFRFRSCNRTEPEKHSRPCLEYDIHQCLSPCTGKISKSDYDHLISQAILFLEGKQDQVLKLLIRLMNEASARLDYETAALRRDQIASIKEVIEGQQLAARVTGEQDAIAFAQEGDLSMVQVFFIRRGKLIGRESFCLQGTREEKPGDILSEFAKQFYHSSTQIPPKIVTQYPVSDREILEKWLSQRRGDKVHITAGLRGQPKELINIVAENAREQLKQARIKNLSSSVTLTDALAELQTALGLSLPPQRIEGYDISNIQGTNAVGSMVVFENGKPQKAHYRRFRIKTVKGADDFSMLKEVISRRFGRVHREDAGESFARLPSLMLIDGGKGQLSSVKETLDKLGLEGQAVIGLAKEFEEIYLPHKSEPIRLAANSPALQLLQRVRDEAHRFALGYHLHIRQKSGLTSALDGIPGVGPSRRRLLIKTFGSVAGIRQASFEKLSQVKGINQALALSIKELL.

Residues 15-94 (ENPGVYLMKN…IKRHRPYFNV (80 aa)) form the GIY-YIG domain. Positions 204–239 (DQVLKLLIRLMNEASARLDYETAALRRDQIASIKEV) constitute a UVR domain.

This sequence belongs to the UvrC family. In terms of assembly, interacts with UvrB in an incision complex.

It is found in the cytoplasm. Functionally, the UvrABC repair system catalyzes the recognition and processing of DNA lesions. UvrC both incises the 5' and 3' sides of the lesion. The N-terminal half is responsible for the 3' incision and the C-terminal half is responsible for the 5' incision. This Dehalococcoides mccartyi (strain CBDB1) protein is UvrABC system protein C.